The primary structure comprises 243 residues: Urease accessory protein UreF 2 (243 aa).

The protein belongs to the UreF family. In terms of assembly, ureD, UreF and UreG form a complex that acts as a GTP-hydrolysis-dependent molecular chaperone, activating the urease apoprotein by helping to assemble the nickel containing metallocenter of UreC. The UreE protein probably delivers the nickel.

Its subcellular location is the cytoplasm. Required for maturation of urease via the functional incorporation of the urease nickel metallocenter. Functionally, disrupting the ure2 operon has no effect on urease activity or pathogen survival in BALB/c mice when administered orally. This chain is Urease accessory protein UreF 2, found in Brucella abortus (strain 2308).